Reading from the N-terminus, the 512-residue chain is Phospho-2-dehydro-3-deoxyheptonate aldolase 2, chloroplastic (512 aa).

The N-terminal 57 residues, 1–57 (MALTATATTRGGSALPNSCLQTPKFQSLQKPTFISSFPTNKKTKPRTKHISAVQSPP), are a transit peptide targeting the chloroplast. The interval 37–57 (FPTNKKTKPRTKHISAVQSPP) is disordered. Cysteine 126 contributes to the Mn(2+) binding site. Residues arginine 165, 324–325 (ER), lysine 347, and arginine 378 contribute to the substrate site. Mn(2+) is bound by residues histidine 410, glutamate 452, and aspartate 482.

The protein belongs to the class-II DAHP synthase family. Homodimer. The cofactor is Mn(2+). Mostly expressed in leaves and stems, and, to a lower extent, in roots, stigmas, anthers, petal tubes, petal limbs and sepals.

It localises to the plastid. Its subcellular location is the chloroplast. The enzyme catalyses D-erythrose 4-phosphate + phosphoenolpyruvate + H2O = 7-phospho-2-dehydro-3-deoxy-D-arabino-heptonate + phosphate. It participates in metabolic intermediate biosynthesis; chorismate biosynthesis; chorismate from D-erythrose 4-phosphate and phosphoenolpyruvate: step 1/7. Involved in the production of volatile organic compounds (VOCs). Catalyzes an aldol-like condensation reaction between phosphoenolpyruvate (PEP) and D-erythrose 4-phosphate (E4P) to generate 3-deoxy-D-arabino-heptulosonate 7-phosphate (DAH7P) and inorganic phosphate. The sequence is that of Phospho-2-dehydro-3-deoxyheptonate aldolase 2, chloroplastic from Petunia hybrida (Petunia).